Here is a 633-residue protein sequence, read N- to C-terminus: Extracellular metalloproteinase 3 (633 aa).

The N-terminal stretch at 1–18 (MHGLLLAGLLALPMNVLA) is a signal peptide. Residues 19 to 246 (HPAEHHASNV…VHNVVDYVAS (228 aa)) constitute a propeptide that is removed on maturation. Asn232 and Asn410 each carry an N-linked (GlcNAc...) asparagine glycan. His429 is a Zn(2+) binding site. Residue Glu430 is part of the active site. His433 is a binding site for Zn(2+). 2 N-linked (GlcNAc...) asparagine glycosylation sites follow: Asn480 and Asn622.

It belongs to the peptidase M36 family. Requires Zn(2+) as cofactor.

The protein localises to the secreted. Secreted metalloproteinase that allows assimilation of proteinaceous substrates and probably acts as a virulence factor. In Arthroderma gypseum (strain ATCC MYA-4604 / CBS 118893) (Microsporum gypseum), this protein is Extracellular metalloproteinase 3 (MEP3).